A 447-amino-acid chain; its full sequence is N-succinylarginine dihydrolase (447 aa).

Residues 19-28 (AGLSFGNEAS), Asn110, and 137-138 (HR) contribute to the substrate site. Glu174 is a catalytic residue. Substrate is bound at residue Arg212. The active site involves His248. Substrate is bound by residues Asp250 and Asn359. Cys365 (nucleophile) is an active-site residue.

This sequence belongs to the succinylarginine dihydrolase family. In terms of assembly, homodimer.

The enzyme catalyses N(2)-succinyl-L-arginine + 2 H2O + 2 H(+) = N(2)-succinyl-L-ornithine + 2 NH4(+) + CO2. It functions in the pathway amino-acid degradation; L-arginine degradation via AST pathway; L-glutamate and succinate from L-arginine: step 2/5. Catalyzes the hydrolysis of N(2)-succinylarginine into N(2)-succinylornithine, ammonia and CO(2). This chain is N-succinylarginine dihydrolase, found in Escherichia coli O8 (strain IAI1).